The primary structure comprises 265 residues: DNA-binding dual transcriptional regulator Rns (265 aa).

2 residues coordinate decanoate: His-20 and Arg-75. Residues 164–261 (DKVRNLIEKD…GVTPKQFFTY (98 aa)) enclose the HTH araC/xylS-type domain. 2 consecutive DNA-binding regions (H-T-H motif) follow at residues 181 to 202 (GIIA…ESEN) and 228 to 251 (ISQI…NKHY).

In terms of assembly, homodimer; each subunit binds one decanoate molecule.

Its subcellular location is the cytoplasm. Its activity is regulated as follows. Rns-dependent expression of pilins and outer membrane proteins CexE-alpha and CexE-epsilon are inhibited in vivo by decanoic acid (decanoate); has no effect on expression of DnaK or flagellins. Decanoate relieves Rns-dependent repression of nlpA. In terms of biological role, a transcription factor required for the expression of the CS1 and CS2 adhesins of enterotoxigenic E.coli. Required for expression of pilins and some outer membrane lipoproteins. Represses expression of nlpA. The chain is DNA-binding dual transcriptional regulator Rns from Escherichia coli.